The sequence spans 283 residues: Bifunctional protein FolD (283 aa).

Residues 164-166 (GRS), serine 189, and isoleucine 230 contribute to the NADP(+) site.

This sequence belongs to the tetrahydrofolate dehydrogenase/cyclohydrolase family. In terms of assembly, homodimer.

It carries out the reaction (6R)-5,10-methylene-5,6,7,8-tetrahydrofolate + NADP(+) = (6R)-5,10-methenyltetrahydrofolate + NADPH. The enzyme catalyses (6R)-5,10-methenyltetrahydrofolate + H2O = (6R)-10-formyltetrahydrofolate + H(+). Its pathway is one-carbon metabolism; tetrahydrofolate interconversion. Its function is as follows. Catalyzes the oxidation of 5,10-methylenetetrahydrofolate to 5,10-methenyltetrahydrofolate and then the hydrolysis of 5,10-methenyltetrahydrofolate to 10-formyltetrahydrofolate. This chain is Bifunctional protein FolD, found in Lactobacillus delbrueckii subsp. bulgaricus (strain ATCC BAA-365 / Lb-18).